The sequence spans 80 residues: Clavanin-C (80 aa).

Residues 1–19 (MKTTILILLILGLGINAKS) form the signal peptide. Residues 20-29 (LEERKSEEEK) constitute a propeptide that is removed on maturation. Phenylalanine 52 carries the phenylalanine amide modification. The propeptide occupies 54–80 (DDQQDNGKFYGHYAEDNGKHWYDTGDQ).

Hemocytes and pharyngeal tissues.

The protein resides in the secreted. In terms of biological role, has antimicrobial activity against E.coli, L.monocytogenes and C.albicans. This is Clavanin-C from Styela clava (Sea squirt).